Here is a 344-residue protein sequence, read N- to C-terminus: 4-hydroxy-2-oxovalerate aldolase (344 aa).

Residues 8–260 enclose the Pyruvate carboxyltransferase domain; sequence VTLHDMSLRD…NHGIDLYKIM (253 aa). 16–17 contributes to the substrate binding site; sequence RD. Asp-17 is a Mn(2+) binding site. The Proton acceptor role is filled by His-20. Substrate contacts are provided by Ser-170 and His-199. 2 residues coordinate Mn(2+): His-199 and His-201. Tyr-290 is a binding site for substrate.

This sequence belongs to the 4-hydroxy-2-oxovalerate aldolase family.

The catalysed reaction is (S)-4-hydroxy-2-oxopentanoate = acetaldehyde + pyruvate. The chain is 4-hydroxy-2-oxovalerate aldolase (mhpE) from Pseudoalteromonas translucida (strain TAC 125).